Consider the following 87-residue polypeptide: UPF0175 protein AF_0597 (87 aa).

It belongs to the UPF0175 family.

This Archaeoglobus fulgidus (strain ATCC 49558 / DSM 4304 / JCM 9628 / NBRC 100126 / VC-16) protein is UPF0175 protein AF_0597.